Reading from the N-terminus, the 1052-residue chain is Membrane-bound transcription factor site-1 protease (1052 aa).

The signal sequence occupies residues 1 to 17 (MKLINIWLLLLVVLLCG). Residues 18–186 (KKHLGDRLGK…TGRHSSRRLL (169 aa)) constitute a propeptide that is removed on maturation. A glycan (N-linked (GlcNAc...) asparagine) is linked at asparagine 148. Phosphoserine is present on serine 168. At 187–999 (RAIPRQVAQT…MPGRYNQEVG (813 aa)) the chain is on the lumenal side. Positions 190–472 (PRQVAQTLQA…HGKLDLLRAY (283 aa)) constitute a Peptidase S8 domain. The active-site Charge relay system is the aspartate 218. N-linked (GlcNAc...) asparagine glycosylation is present at asparagine 236. Residue histidine 249 is the Charge relay system of the active site. An N-linked (GlcNAc...) asparagine glycan is attached at asparagine 305. Serine 414 serves as the catalytic Charge relay system. Asparagine 515 and asparagine 728 each carry an N-linked (GlcNAc...) asparagine glycan. Positions 877–887 (PSLSHSGNRQR) are enriched in polar residues. The interval 877 to 900 (PSLSHSGNRQRPPSGAGLAPPERM) is disordered. N-linked (GlcNAc...) asparagine glycosylation is present at asparagine 939. The helical transmembrane segment at 1000–1022 (QTIPVFAFLGAMVALAFFVVQIS) threads the bilayer. Residues 1023 to 1052 (KAKSRPKRRRPRAKRPQLTQQTHPPRTPSV) lie on the Cytoplasmic side of the membrane. Over residues 1025–1037 (KSRPKRRRPRAKR) the composition is skewed to basic residues. The disordered stretch occupies residues 1025-1052 (KSRPKRRRPRAKRPQLTQQTHPPRTPSV).

Belongs to the peptidase S8 family. It depends on Ca(2+) as a cofactor. In terms of processing, the 148 kDa zymogen is processed progressively into two membrane-bound 120 and 106 kDa forms in the endoplasmic reticulum, and late into a secreted 98 kDa form. The propeptide is autocatalytically removed through an intramolecular cleavage after Leu-186. Further cleavage generates 14, 10, and 8 kDa intermediates.

The protein localises to the endoplasmic reticulum membrane. It localises to the golgi apparatus membrane. It catalyses the reaction Processes precursors containing basic and hydrophobic/aliphatic residues at P4 and P2, respectively, with a relatively relaxed acceptance of amino acids at P1 and P3.. With respect to regulation, inhibited by divalent copper and zinc ions, but not by nickel or cobalt. Inhibited by its prosegment, but not smaller fragments. Inhibited by 4-(2-aminoethyl)benzenesulfonyl fluoride (AEBSF), a serine protease inhibitor. In terms of biological role, serine protease that cleaves after hydrophobic or small residues, provided that Arg or Lys is in position P4: known substrates include SREBF1/SREBP1, SREBF2/SREBP2, BDNF, GNPTAB, ATF6, ATF6B and FAM20C. Cleaves substrates after Arg-Ser-Val-Leu (SREBP2), Arg-His-Leu-Leu (ATF6), Arg-Gly-Leu-Thr (BDNF) and its own propeptide after Arg-Arg-Leu-Leu. Catalyzes the first step in the proteolytic activation of the sterol regulatory element-binding proteins (SREBPs) SREBF1/SREBP1 and SREBF2/SREBP2. Also mediates the first step in the proteolytic activation of the cyclic AMP-dependent transcription factor ATF-6 (ATF6 and ATF6B). Mediates the protein cleavage of GNPTAB into subunit alpha and beta, thereby participating in biogenesis of lysosomes. Cleaves the propeptide from FAM20C which is required for FAM20C secretion from the Golgi apparatus membrane and for enhancement of FAM20C kinase activity, promoting osteoblast differentiation and biomineralization. Involved in the regulation of M6P-dependent Golgi-to-lysosome trafficking of lysosomal enzymes. It is required for the activation of CREB3L2/BBF2H7, a transcriptional activator of MIA3/TANGO and other genes controlling mega vesicle formation. Therefore, it plays a key role in the regulation of mega vesicle-mediated collagen trafficking. In astrocytes and osteoblasts, upon DNA damage and ER stress, mediates the first step of the regulated intramembrane proteolytic activation of the transcription factor CREB3L1, leading to the inhibition of cell-cycle progression. The polypeptide is Membrane-bound transcription factor site-1 protease (Cricetulus griseus (Chinese hamster)).